Consider the following 206-residue polypeptide: 2,3-bisphosphoglycerate-dependent phosphoglycerate mutase (206 aa).

Substrate contacts are provided by residues 9-16, 22-23, Arg-61, 88-91, Lys-99, 115-116, and 159-160; these read RHGQSEWN, TG, ERNY, RR, and GN. His-10 functions as the Tele-phosphohistidine intermediate in the catalytic mechanism. Residue Glu-88 is the Proton donor/acceptor of the active site.

This sequence belongs to the phosphoglycerate mutase family. BPG-dependent PGAM subfamily. In terms of assembly, homodimer.

The catalysed reaction is (2R)-2-phosphoglycerate = (2R)-3-phosphoglycerate. It participates in carbohydrate degradation; glycolysis; pyruvate from D-glyceraldehyde 3-phosphate: step 3/5. In terms of biological role, catalyzes the interconversion of 2-phosphoglycerate and 3-phosphoglycerate. This is 2,3-bisphosphoglycerate-dependent phosphoglycerate mutase from Bartonella henselae (strain ATCC 49882 / DSM 28221 / CCUG 30454 / Houston 1) (Rochalimaea henselae).